A 588-amino-acid polypeptide reads, in one-letter code: Mediator of RNA polymerase II transcription subunit 26 (588 aa).

In terms of domain architecture, TFIIS N-terminal spans 10 to 87 (QMRDRLLQAI…RSWQKLIEPV (78 aa)). Disordered stretches follow at residues 112 to 393 (RPEM…YTVN) and 412 to 441 (KLTF…PTEQ). The span at 123–133 (SIHDLKNRNDI) shows a compositional bias: basic and acidic residues. Polar residues predominate over residues 179–191 (PLPTNGISGSPES). Residues 207-218 (SRLEPSDNEKHS) show a composition bias toward basic and acidic residues. Residues 314 to 325 (SPLPLAQPPTPP) show a composition bias toward pro residues. Residues S435 and S458 each carry the phosphoserine modification.

Belongs to the Mediator complex subunit 26 family. Component of the Mediator complex, which is composed of MED1, MED4, MED6, MED7, MED8, MED9, MED10, MED11, MED12, MED13, MED13L, MED14, MED15, MED16, MED17, MED18, MED19, MED20, MED21, MED22, MED23, MED24, MED25, MED26, MED27, MED29, MED30, MED31, CCNC, CDK8 and CDC2L6/CDK11. The MED12, MED13, CCNC and CDK8 subunits form a distinct module termed the CDK8 module. Mediator containing the CDK8 module is less active than Mediator lacking this module in supporting transcriptional activation. Individual preparations of the Mediator complex lacking one or more distinct subunits have been variously termed ARC, CRSP, DRIP, PC2, SMCC and TRAP. Interacts with CEBPB (when not methylated).

It localises to the nucleus. In terms of biological role, component of the Mediator complex, a coactivator involved in the regulated transcription of nearly all RNA polymerase II-dependent genes. Mediator functions as a bridge to convey information from gene-specific regulatory proteins to the basal RNA polymerase II transcription machinery. Mediator is recruited to promoters by direct interactions with regulatory proteins and serves as a scaffold for the assembly of a functional pre-initiation complex with RNA polymerase II and the general transcription factors. This Mus musculus (Mouse) protein is Mediator of RNA polymerase II transcription subunit 26 (Med26).